The sequence spans 380 residues: MEPAIKYRLIKKEKHTGARLGEIVTPHGTFKTPMFMPVGTQASVKTMAPEDLKEMGAGIILSNTYHLWLRPGEDIVEKAGGLHKFMNWDRGVLTDSGGFQVFSLAKLRDISEEGVAFKSHLNGEKLFLSPEKAIHVENALGADIMMSFDECPPFFESYDYVKKSVERTSRWAERGLIAHQNPATQGLFGIVQGAGFEDLRRQSARDLVGMDFPGYSIGGLSVGESKGEMNRVLDFTTPMLPEDKPRYLMGVGSPDALIDGVIRGVDMFDCVLPTRIARNGTTMTSQGRLVVKNAKYSEDFRPLDPKCDCYVCKNYTRAYIRHLIKADETFGIHLTSYHNLYFLINLMHQVQDAIEQDNLLEFREAFFEEYGYNENNGRNF.

Aspartate 95 functions as the Proton acceptor in the catalytic mechanism. Substrate is bound by residues 95-99, aspartate 149, glutamine 192, and glycine 219; that span reads DSGGF. Residues 250 to 256 form an RNA binding region; it reads GVGSPDA. The active-site Nucleophile is aspartate 269. Positions 274–278 are RNA binding; important for wobble base 34 recognition; it reads TRIAR. Positions 307, 309, 312, and 338 each coordinate Zn(2+).

Belongs to the queuine tRNA-ribosyltransferase family. As to quaternary structure, homodimer. Within each dimer, one monomer is responsible for RNA recognition and catalysis, while the other monomer binds to the replacement base PreQ1. The cofactor is Zn(2+).

The catalysed reaction is 7-aminomethyl-7-carbaguanine + guanosine(34) in tRNA = 7-aminomethyl-7-carbaguanosine(34) in tRNA + guanine. The protein operates within tRNA modification; tRNA-queuosine biosynthesis. Functionally, catalyzes the base-exchange of a guanine (G) residue with the queuine precursor 7-aminomethyl-7-deazaguanine (PreQ1) at position 34 (anticodon wobble position) in tRNAs with GU(N) anticodons (tRNA-Asp, -Asn, -His and -Tyr). Catalysis occurs through a double-displacement mechanism. The nucleophile active site attacks the C1' of nucleotide 34 to detach the guanine base from the RNA, forming a covalent enzyme-RNA intermediate. The proton acceptor active site deprotonates the incoming PreQ1, allowing a nucleophilic attack on the C1' of the ribose to form the product. After dissociation, two additional enzymatic reactions on the tRNA convert PreQ1 to queuine (Q), resulting in the hypermodified nucleoside queuosine (7-(((4,5-cis-dihydroxy-2-cyclopenten-1-yl)amino)methyl)-7-deazaguanosine). This Latilactobacillus sakei subsp. sakei (strain 23K) (Lactobacillus sakei subsp. sakei) protein is Queuine tRNA-ribosyltransferase.